The sequence spans 55 residues: Large ribosomal subunit protein bL33 (55 aa).

Basic and acidic residues predominate over residues 1–10; sequence MAKGGREKIK. The tract at residues 1–27 is disordered; that stretch reads MAKGGREKIKLQSTAGTGHFYTTDKNK.

The protein belongs to the bacterial ribosomal protein bL33 family.

The protein is Large ribosomal subunit protein bL33 of Polaromonas naphthalenivorans (strain CJ2).